The following is a 209-amino-acid chain: MRQHVNPLSINFNQIERIPSLGEMFGDSKLNLHLDIGCAAGEFLFDLALVNTSWNYLGIEIREKLVKNAKLKVLESEIKNLYFLFGNANNILNDVQSELIIKNLKSISFYFPDPWFKKRHYKRRVIQPEFINILSNLLQKGTLIFIKTDVKDLFDYMDYTISNNFYFKTIDKKDFNYSESFNPNKVKTNREKYVINNQLDIFERIYIKI.

4 residues coordinate S-adenosyl-L-methionine: Asp-35, Glu-60, Asn-87, and Asp-113. Asp-113 is a catalytic residue. Residues Lys-117 and Asp-149 each coordinate substrate.

This sequence belongs to the class I-like SAM-binding methyltransferase superfamily. TrmB family.

The enzyme catalyses guanosine(46) in tRNA + S-adenosyl-L-methionine = N(7)-methylguanosine(46) in tRNA + S-adenosyl-L-homocysteine. The protein operates within tRNA modification; N(7)-methylguanine-tRNA biosynthesis. In terms of biological role, catalyzes the formation of N(7)-methylguanine at position 46 (m7G46) in tRNA. In Prochlorococcus marinus (strain AS9601), this protein is tRNA (guanine-N(7)-)-methyltransferase.